Here is a 552-residue protein sequence, read N- to C-terminus: Alpha-galactosidase (552 aa).

Substrate is bound by residues Trp65, Tyr191, 220-221, 325-327, Cys368, and Arg383; these read DD and KID. Residue Asp327 is the Nucleophile of the active site. Asp387 serves as the catalytic Proton donor/acceptor.

The protein belongs to the glycosyl hydrolase 36 family. Homodimer.

The enzyme catalyses Hydrolysis of terminal, non-reducing alpha-D-galactose residues in alpha-D-galactosides, including galactose oligosaccharides, galactomannans and galactolipids.. Inhibited by hydrolysis product alpha-galactopyranose and to a lesser extent by beta-galactopyranose, its mutarotational product. Inhibited by synthetic cyclopropyl carbasugars. In terms of biological role, hydrolyzes the short-chain alpha-galactosaccharides raffinose, melibiose and stachyose. The chain is Alpha-galactosidase from Thermotoga maritima (strain ATCC 43589 / DSM 3109 / JCM 10099 / NBRC 100826 / MSB8).